The sequence spans 312 residues: Taste receptor type 2 member 62 (312 aa).

Residues 1 to 4 lie on the Extracellular side of the membrane; that stretch reads MPSL. The helical transmembrane segment at 5-27 threads the bilayer; that stretch reads PTLIFIAIFCLESLAAMLQNGFL. Topologically, residues 28–39 are cytoplasmic; the sequence is VTMLGREWVRCR. Residues 40-62 traverse the membrane as a helical segment; sequence MLSTSDMIVACLAASRFCLHGVA. At 63–81 the chain is on the extracellular side; the sequence is MANNLLASLDFSRAVPYMN. Residues 82-104 form a helical membrane-spanning segment; sequence IFWDLFNALTLWFTALLAAFYCV. Residues 105-127 are Cytoplasmic-facing; it reads KISSFSHPTFAWLKWRISRLVPK. Residues 128-150 traverse the membrane as a helical segment; sequence LIKGSLIICGLEVISSATGNILF. Residues 151-182 are Extracellular-facing; sequence GQRKVSLSSYRNETLVYRVQASFQLYFFLYDG. Residue Asn-162 is glycosylated (N-linked (GlcNAc...) asparagine). Residues 183 to 205 form a helical membrane-spanning segment; that stretch reads FVWSIPFLLFLVSTVLLIVSLCW. Topologically, residues 206–231 are cytoplasmic; it reads QLGQMRDLRPGPCDPSTQAYTMALKS. A helical transmembrane segment spans residues 232 to 254; the sequence is LTFSLIFCTLYFLSLFASALKII. Topologically, residues 255–258 are extracellular; it reads NFQN. A helical membrane pass occupies residues 259–281; it reads HWHWAWEVLIYANICLHSTVLVL. Residues 282-312 lie on the Cytoplasmic side of the membrane; the sequence is RSPKLKKGLKTWPQLQCPCDAGSQGFGRCWP.

This sequence belongs to the G-protein coupled receptor T2R family.

It localises to the membrane. Receptor that may play a role in the perception of bitterness and is gustducin-linked. May play a role in sensing the chemical composition of the gastrointestinal content. The activity of this receptor may stimulate alpha gustducin, mediate PLC-beta-2 activation and lead to the gating of TRPM5. The sequence is that of Taste receptor type 2 member 62 (TAS2R62) from Pan paniscus (Pygmy chimpanzee).